The chain runs to 499 residues: Glycerol kinase (499 aa).

Position 12 (Thr12) interacts with ADP. Thr12, Thr13, and Ser14 together coordinate ATP. Residue Thr12 coordinates sn-glycerol 3-phosphate. Arg16 lines the ADP pocket. The sn-glycerol 3-phosphate site is built by Arg82, Glu83, Tyr135, and Asp245. 5 residues coordinate glycerol: Arg82, Glu83, Tyr135, Asp245, and Gln246. Thr267 and Gly310 together coordinate ADP. Residues Thr267, Gly310, Gln314, and Gly411 each contribute to the ATP site. ADP contacts are provided by Gly411 and Asn415.

It belongs to the FGGY kinase family. In terms of assembly, homotetramer and homodimer (in equilibrium).

The enzyme catalyses glycerol + ATP = sn-glycerol 3-phosphate + ADP + H(+). It functions in the pathway polyol metabolism; glycerol degradation via glycerol kinase pathway; sn-glycerol 3-phosphate from glycerol: step 1/1. Activated by phosphorylation and inhibited by fructose 1,6-bisphosphate (FBP). In terms of biological role, key enzyme in the regulation of glycerol uptake and metabolism. Catalyzes the phosphorylation of glycerol to yield sn-glycerol 3-phosphate. This Clostridium beijerinckii (strain ATCC 51743 / NCIMB 8052) (Clostridium acetobutylicum) protein is Glycerol kinase.